Reading from the N-terminus, the 198-residue chain is NAD(P)H dehydrogenase (quinone) (198 aa).

The Flavodoxin-like domain maps to 4-189 (VLVLYYSMYG…SIARYQGEYV (186 aa)). Residues 10 to 15 (SMYGHI) and 78 to 80 (TRF) contribute to the FMN site. Residue Tyr-12 coordinates NAD(+). Trp-98 contacts substrate. FMN contacts are provided by residues 113–118 (STGTGG) and His-133.

Belongs to the WrbA family. FMN serves as cofactor.

The enzyme catalyses a quinone + NADH + H(+) = a quinol + NAD(+). It catalyses the reaction a quinone + NADPH + H(+) = a quinol + NADP(+). This chain is NAD(P)H dehydrogenase (quinone), found in Escherichia coli (strain SE11).